The sequence spans 536 residues: Multicopper oxidase CueO (536 aa).

Positions 1 to 28 form a signal peptide, tat-type signal; it reads MLRRDFLKYSVALGVASALPLWSRAAFA. 3 consecutive Plastocyanin-like domains span residues 53 to 165, 229 to 295, and 424 to 536; these read KAGQ…IEDD, GWLR…AFDL, and FHNA…GFTV. Positions 101, 103, 141, and 143 each coordinate Cu cation. His463, His466, His468, His519, Cys520, His521, and His525 together coordinate Cu cation.

The protein belongs to the multicopper oxidase family. As to quaternary structure, monomer. Cu cation is required as a cofactor. In terms of processing, predicted to be exported by the Tat system. The position of the signal peptide cleavage has not been experimentally proven.

The protein localises to the periplasm. It catalyses the reaction 4 Cu(+) + O2 + 4 H(+) = 4 Cu(2+) + 2 H2O. Multicopper oxidase involved in copper homeostasis and copper tolerance under both aerobic and anaerobic conditions. Is responsible for the oxidation of Cu(+) to the less harmful Cu(2+) in the periplasm, thereby preventing Cu(+) from entering the cytoplasm. The protein is Multicopper oxidase CueO (cueO) of Salmonella typhimurium (strain LT2 / SGSC1412 / ATCC 700720).